A 357-amino-acid polypeptide reads, in one-letter code: Cytochrome c peroxidase, mitochondrial (357 aa).

The N-terminal 23 residues, 1–23 (MSATALRIAPIASRTFQRRLGYL), are a transit peptide targeting the mitochondrion. Histidine 116 acts as the Proton acceptor in catalysis. The tract at residues 189–212 (PWRSGRTDLPEDMTPDNGRLPDGD) is disordered. Residue histidine 239 coordinates heme b. The active-site Tryptophan radical intermediate is the tryptophan 255.

The protein belongs to the peroxidase family. Cytochrome c peroxidase subfamily. Forms a one-to-one complex with cytochrome c. Heme b serves as cofactor.

The protein localises to the mitochondrion matrix. It localises to the mitochondrion intermembrane space. The catalysed reaction is 2 Fe(II)-[cytochrome c] + H2O2 + 2 H(+) = 2 Fe(III)-[cytochrome c] + 2 H2O. Destroys radicals which are normally produced within the cells and which are toxic to biological systems. The polypeptide is Cytochrome c peroxidase, mitochondrial (Candida glabrata (strain ATCC 2001 / BCRC 20586 / JCM 3761 / NBRC 0622 / NRRL Y-65 / CBS 138) (Yeast)).